The sequence spans 180 residues: Beta-lactoglobulin-1/B (180 aa).

The signal sequence occupies residues 1–18 (MKCLLLALGLALACGVQA). Cystine bridges form between C84–C178, C124–C137, and C124–C139.

Belongs to the calycin superfamily. Lipocalin family. Under physiological conditions beta-lactoglobulin exists as an equilibrium mixture of monomeric and dimeric forms. Alternate disulfide bonds occur in equal amounts.

Its subcellular location is the secreted. Its function is as follows. Lactoglobulin is the primary component of whey, it binds retinol and is probably involved in the transport of that molecule. This Ovis aries (Sheep) protein is Beta-lactoglobulin-1/B.